Consider the following 264-residue polypeptide: Small ribosomal subunit protein uS2 (264 aa).

The disordered stretch occupies residues 233–264 (AQTQAGGKAEQEAPATEEAADAQTEEAATPAE).

Belongs to the universal ribosomal protein uS2 family.

This is Small ribosomal subunit protein uS2 from Psychrobacter arcticus (strain DSM 17307 / VKM B-2377 / 273-4).